The chain runs to 466 residues: FBD-associated F-box protein At5g22730 (466 aa).

Positions 27 to 80 (EDLISKLPDSLITQILLYLPIKDIVRTSSLSSRWKSLWLLIPRLDLDSEEFQDY) constitute an F-box domain. The FBD domain maps to 385-436 (DEPIIFSSVPRCLVSSLESVEIKKFNGRPAKMEVARYFLENSGVLQKLVLHL).

This Arabidopsis thaliana (Mouse-ear cress) protein is FBD-associated F-box protein At5g22730.